The chain runs to 252 residues: Chaperone protein AggD (252 aa).

Positions Met-1–Ala-22 are cleaved as a signal peptide.

Belongs to the periplasmic pilus chaperone family.

Its subcellular location is the periplasm. Its function is as follows. Involved in the biogenesis of the AAF/I fimbriae. In Escherichia coli, this protein is Chaperone protein AggD (aggD).